Reading from the N-terminus, the 373-residue chain is MSEKKINLLDLDRKAMRALFADLGEKPFRADQLMKWIYHFGVSDFEEMTNINKVLRQKLAARCEIVAPEISGYQKSADGTIKFAIHVGEGQEVETVYIPEDDRATLCVSSQVGCALECTFCSTAQQGFNRNLTVSEIVGQIWRVSHFLGFAKETGERPITNVVMMGMGEPLLNLANVIPAMDIMLDDFGFSLSKRRVTLSTSGVVPALDKLGDALDVALAVSIHAPNDELRDILVPVNKKYPLQEFLAGIRRYIAKSNANRGRVTVEYVMLDHINDSTEQAHELAQLMKDTPCKVNLIPFNPYPGSPYGRSSNSRIDRFSKVLMEYGLTVIVRKTRGDDIDAACGQLAGDIRDRTKRLAKKRMQENQISVTMN.

The Proton acceptor role is filled by E94. One can recognise a Radical SAM core domain in the interval 100–339 (EDDRATLCVS…VIVRKTRGDD (240 aa)). C107 and C344 are joined by a disulfide. Positions 114, 118, and 121 each coordinate [4Fe-4S] cluster. S-adenosyl-L-methionine-binding positions include 168 to 169 (GE), S200, 222 to 224 (SIH), and N301. The S-methylcysteine intermediate role is filled by C344.

It belongs to the radical SAM superfamily. RlmN family. The cofactor is [4Fe-4S] cluster.

The protein localises to the cytoplasm. The catalysed reaction is adenosine(2503) in 23S rRNA + 2 reduced [2Fe-2S]-[ferredoxin] + 2 S-adenosyl-L-methionine = 2-methyladenosine(2503) in 23S rRNA + 5'-deoxyadenosine + L-methionine + 2 oxidized [2Fe-2S]-[ferredoxin] + S-adenosyl-L-homocysteine. The enzyme catalyses adenosine(37) in tRNA + 2 reduced [2Fe-2S]-[ferredoxin] + 2 S-adenosyl-L-methionine = 2-methyladenosine(37) in tRNA + 5'-deoxyadenosine + L-methionine + 2 oxidized [2Fe-2S]-[ferredoxin] + S-adenosyl-L-homocysteine. Specifically methylates position 2 of adenine 2503 in 23S rRNA and position 2 of adenine 37 in tRNAs. m2A2503 modification seems to play a crucial role in the proofreading step occurring at the peptidyl transferase center and thus would serve to optimize ribosomal fidelity. In Shewanella oneidensis (strain ATCC 700550 / JCM 31522 / CIP 106686 / LMG 19005 / NCIMB 14063 / MR-1), this protein is Dual-specificity RNA methyltransferase RlmN.